The primary structure comprises 411 residues: LL-diaminopimelate aminotransferase (411 aa).

Positions 15 and 42 each coordinate substrate. Pyridoxal 5'-phosphate-binding positions include Y72, 108-109, Y132, N187, Y218, and 246-248; these read AK and SFS. K109, Y132, and N187 together coordinate substrate. K249 carries the post-translational modification N6-(pyridoxal phosphate)lysine. R257 and N292 together coordinate pyridoxal 5'-phosphate. Substrate is bound by residues N292 and R388.

Belongs to the class-I pyridoxal-phosphate-dependent aminotransferase family. LL-diaminopimelate aminotransferase subfamily. Homodimer. Pyridoxal 5'-phosphate is required as a cofactor.

The enzyme catalyses (2S,6S)-2,6-diaminopimelate + 2-oxoglutarate = (S)-2,3,4,5-tetrahydrodipicolinate + L-glutamate + H2O + H(+). It participates in amino-acid biosynthesis; L-lysine biosynthesis via DAP pathway; LL-2,6-diaminopimelate from (S)-tetrahydrodipicolinate (aminotransferase route): step 1/1. In terms of biological role, involved in the synthesis of meso-diaminopimelate (m-DAP or DL-DAP), required for both lysine and peptidoglycan biosynthesis. Catalyzes the direct conversion of tetrahydrodipicolinate to LL-diaminopimelate. This chain is LL-diaminopimelate aminotransferase, found in Rippkaea orientalis (strain PCC 8801 / RF-1) (Cyanothece sp. (strain PCC 8801)).